The primary structure comprises 121 residues: Insulin-like peptide 01 (121 aa).

The signal sequence occupies residues 1–24; it reads MDSFTRASLITFLILLTLTSLVFS. The propeptide occupies 25–45; that stretch reads NGCMMRGGCFKTSEDAHRLIM. Intrachain disulfides connect C52-C107, C64-C120, and C106-C111. Positions 69-97 are cleaved as a propeptide — c peptide; it reads RRRKRDLRRKLGIVMDRKESHKFLRRRKR.

It belongs to the insulin family.

Its subcellular location is the secreted. In terms of biological role, insulin decreases blood glucose concentration. May have evolved to activate insulin receptors (INSR) in vertebrates. Molecular docking studies reveals unique interaction with the human insulin receptor. In vivo, insulin-like peptide injection reduces blood glucose levels in two models of zebrafish diabetes (streptozotocin- and glucose-induced). Also shorter swimming distance of zebrafish larvae, an effect which is not observed with human insulin. In Exaiptasia diaphana (Tropical sea anemone), this protein is Insulin-like peptide 01.